A 609-amino-acid polypeptide reads, in one-letter code: Phosphoenolpyruvate carboxykinase [GTP] (609 aa).

Residues arginine 81 and tyrosine 220 to glycine 222 each bind substrate. Mn(2+) is bound by residues lysine 229 and histidine 249. Substrate is bound at residue serine 271. GTP is bound at residue alanine 272–asparagine 277. Cysteine 273 is an active-site residue. Mn(2+) is bound at residue aspartate 296. Asparagine 387 to arginine 389 contacts substrate. GTP contacts are provided by residues arginine 389, arginine 420, and phenylalanine 515–asparagine 518.

Belongs to the phosphoenolpyruvate carboxykinase [GTP] family. Monomer. It depends on Mn(2+) as a cofactor.

Its subcellular location is the cytoplasm. It carries out the reaction oxaloacetate + GTP = phosphoenolpyruvate + GDP + CO2. It participates in carbohydrate biosynthesis; gluconeogenesis. Its function is as follows. Catalyzes the conversion of oxaloacetate (OAA) to phosphoenolpyruvate (PEP), the rate-limiting step in the metabolic pathway that produces glucose from lactate and other precursors derived from the citric acid cycle. This is Phosphoenolpyruvate carboxykinase [GTP] from Mycobacterium ulcerans (strain Agy99).